Here is a 141-residue protein sequence, read N- to C-terminus: Large ribosomal subunit protein uL11 (141 aa).

This sequence belongs to the universal ribosomal protein uL11 family. Part of the ribosomal stalk of the 50S ribosomal subunit. Interacts with L10 and the large rRNA to form the base of the stalk. L10 forms an elongated spine to which L12 dimers bind in a sequential fashion forming a multimeric L10(L12)X complex. Post-translationally, one or more lysine residues are methylated.

Its function is as follows. Forms part of the ribosomal stalk which helps the ribosome interact with GTP-bound translation factors. This is Large ribosomal subunit protein uL11 from Clostridium tetani (strain Massachusetts / E88).